Here is a 365-residue protein sequence, read N- to C-terminus: MNLAAMDPLTYDVQLEAKRVKLKQLFTDFDTPELESFSSETAHYRMRAEFRMWHEGEDLYYYMFDKELNSKVRCDQFLPASELINKMMPVLVELLKPNTILRHRLFQIDFLSTLSGEILVSLLYHKQLDAEWEEQAKILKQTLSSQFNVNLIGRARKQKLIFDKDFVVESLNVAGKQLQYHQIENSFTQPNGKVSVKMLEWAIDVTKNSTGDLLELYCGNGNFSIALAQNFERVLATELAKPSVESAQYNIKMNHVDNLQIIRMSAEDFTDAMAKKRSYRRLEGIDLDSYNCNTIFVDPPRAGLDENTVKLVQGYERIVYISCNPNTLLDNLKELSKTHNITRFVLFDQFPYTDHMESGVFLEKK.

S-adenosyl-L-methionine contacts are provided by Gln189, Tyr217, Asn222, Glu238, and Asp298. Cys323 serves as the catalytic Nucleophile. Glu357 serves as the catalytic Proton acceptor.

This sequence belongs to the class I-like SAM-binding methyltransferase superfamily. RNA M5U methyltransferase family. TrmA subfamily.

The enzyme catalyses uridine(54) in tRNA + S-adenosyl-L-methionine = 5-methyluridine(54) in tRNA + S-adenosyl-L-homocysteine + H(+). It catalyses the reaction uridine(341) in tmRNA + S-adenosyl-L-methionine = 5-methyluridine(341) in tmRNA + S-adenosyl-L-homocysteine + H(+). Dual-specificity methyltransferase that catalyzes the formation of 5-methyluridine at position 54 (m5U54) in all tRNAs, and that of position 341 (m5U341) in tmRNA (transfer-mRNA). The protein is tRNA/tmRNA (uracil-C(5))-methyltransferase of Shewanella piezotolerans (strain WP3 / JCM 13877).